The chain runs to 342 residues: Dihydroorotase (342 aa).

The Zn(2+) site is built by His13 and His15. Substrate-binding positions include 15–17 (HLR) and Asn41. Residues Lys98, His135, and His173 each coordinate Zn(2+). Lys98 is subject to N6-carboxylysine. His135 provides a ligand contact to substrate. Substrate is bound at residue Leu218. Asp246 lines the Zn(2+) pocket. Asp246 is an active-site residue. 2 residues coordinate substrate: His250 and Ala262.

The protein belongs to the metallo-dependent hydrolases superfamily. DHOase family. Class II DHOase subfamily. Homodimer. Zn(2+) is required as a cofactor.

The catalysed reaction is (S)-dihydroorotate + H2O = N-carbamoyl-L-aspartate + H(+). Its pathway is pyrimidine metabolism; UMP biosynthesis via de novo pathway; (S)-dihydroorotate from bicarbonate: step 3/3. Its function is as follows. Catalyzes the reversible cyclization of carbamoyl aspartate to dihydroorotate. This Aliivibrio fischeri (strain MJ11) (Vibrio fischeri) protein is Dihydroorotase.